The sequence spans 194 residues: Histone H1.0 (194 aa).

Methionine 1 carries the post-translational modification N-acetylmethionine. Over residues 1 to 11 (MTENSTSTPAA) the composition is skewed to low complexity. Residues 1-29 (MTENSTSTPAAKPKRAKASKKSTDHPKYS) form a disordered region. Threonine 2 is subject to N-acetylthreonine; in Histone H1.0, N-terminally processed. The H15 domain occupies 24–97 (DHPKYSDMIV…GASGSFRLAK (74 aa)). At arginine 42 the chain carries Citrulline. The interval 83-194 (QTKGVGASGS…SSAKRTGKKK (112 aa)) is disordered. At serine 104 the chain carries ADP-ribosylserine. The span at 105 to 194 (VAFKKTKKEV…SSAKRTGKKK (90 aa)) shows a compositional bias: basic residues.

The protein belongs to the histone H1/H5 family. ADP-ribosylated on Ser-104 in response to DNA damage.

It localises to the nucleus. Its subcellular location is the chromosome. In terms of biological role, histones H1 are necessary for the condensation of nucleosome chains into higher-order structures. The histones H1.0 are found in cells that are in terminal stages of differentiation or that have low rates of cell division. This chain is Histone H1.0 (H1-0), found in Bos taurus (Bovine).